The primary structure comprises 359 residues: Acetoin catabolism protein X (359 aa).

The protein localises to the cell membrane. It participates in ketone degradation; acetoin degradation. Functionally, essential for acetoin catabolism. The protein is Acetoin catabolism protein X (acoX) of Cupriavidus necator (strain ATCC 17699 / DSM 428 / KCTC 22496 / NCIMB 10442 / H16 / Stanier 337) (Ralstonia eutropha).